A 480-amino-acid polypeptide reads, in one-letter code: Krueppel-like factor 10 (480 aa).

Positions 1-12 are enriched in polar residues; the sequence is MLNFGASLQQAS. Disordered stretches follow at residues 1-32, 64-83, and 97-146; these read MLNFGASLQQASEGKMELISEKSKEGAHPWDK, VTPVSDTSEEDSLLPGTPDL, and PSDF…APPL. Basic and acidic residues predominate over residues 14-32; it reads GKMELISEKSKEGAHPWDK. Ser183 carries the phosphoserine modification. The interval 202-222 is disordered; that stretch reads AAVSPNRPKPEPSTAANGAEK. Ser249 is subject to Phosphoserine. C2H2-type zinc fingers lie at residues 369–393, 399–423, and 429–451; these read HICSHPGCGKTYFKSSHLKAHVRTH, FSCSWKGCERRFARSDELSRHRRTH, and FACPMCDRRFMRSDHLTKHARRH.

It belongs to the Sp1 C2H2-type zinc-finger protein family. Ubiquitinated; mediated by SIAH1 and leading to its subsequent proteasomal degradation.

It is found in the nucleus. In terms of biological role, transcriptional repressor which binds to the consensus sequence 5'-GGTGTG-3'. Regulates the circadian expression of genes involved in lipogenesis, gluconeogenesis, and glycolysis in the liver. Represses the expression of PCK2, a rate-limiting step enzyme of gluconeogenesis. May play a role in the cell cycle regulation. Plays a role in the regulation of the circadian clock; binds to the GC box sequence in the promoter of the core clock component ARTNL/BMAL1 and represses its transcriptional activity. The protein is Krueppel-like factor 10 (Klf10) of Rattus norvegicus (Rat).